Consider the following 346-residue polypeptide: NADH-ubiquinone oxidoreductase chain 2 (346 aa).

The next 10 membrane-spanning stretches (helical) occupy residues 3–23 (PIIFTTILLTIMLGTNNVMIS), 25–45 (HWLLVWIGFEMNMLAIIPIMM), 67–87 (SMLLMMAVIINLMFSGQWTVM), 96–116 (MLMTMALAMKLGMAPFHFWVP), 122–142 (IPLSSGLILLTWQKLAPMSVL), 145–165 (IFPSINLNLILTLSILSILIG), 200–220 (TLLNLIIYITMTSTMFTMFMA), 238–258 (IMTILILATLLSMGGLPPLSG), 273–293 (NSIILPTFMAITALLNLYFYM), and 324–344 (FLPTMVVLSTMTLPLTPMLSV).

It belongs to the complex I subunit 2 family. Core subunit of respiratory chain NADH dehydrogenase (Complex I) which is composed of 45 different subunits. Interacts with TMEM242.

The protein resides in the mitochondrion inner membrane. The catalysed reaction is a ubiquinone + NADH + 5 H(+)(in) = a ubiquinol + NAD(+) + 4 H(+)(out). Its function is as follows. Core subunit of the mitochondrial membrane respiratory chain NADH dehydrogenase (Complex I) which catalyzes electron transfer from NADH through the respiratory chain, using ubiquinone as an electron acceptor. Essential for the catalytic activity and assembly of complex I. The polypeptide is NADH-ubiquinone oxidoreductase chain 2 (Bos mutus grunniens (Wild yak)).